The chain runs to 93 residues: Defensin-like protein 210 (93 aa).

Positions 1-19 (MKTIILFLTLLVISSSCTS) are cleaved as a signal peptide. Disulfide bonds link Cys63-Cys80, Cys66-Cys85, and Cys70-Cys87.

The protein belongs to the DEFL family.

Its subcellular location is the secreted. In Arabidopsis thaliana (Mouse-ear cress), this protein is Defensin-like protein 210.